A 149-amino-acid chain; its full sequence is Large ribosomal subunit protein uL13 (149 aa).

Belongs to the universal ribosomal protein uL13 family. Part of the 50S ribosomal subunit.

Functionally, this protein is one of the early assembly proteins of the 50S ribosomal subunit, although it is not seen to bind rRNA by itself. It is important during the early stages of 50S assembly. The chain is Large ribosomal subunit protein uL13 from Bifidobacterium longum subsp. infantis (strain ATCC 15697 / DSM 20088 / JCM 1222 / NCTC 11817 / S12).